A 333-amino-acid chain; its full sequence is Ketol-acid reductoisomerase (NADP(+)) (333 aa).

The KARI N-terminal Rossmann domain occupies 6-186 (TRVYTECDAD…GALRAGAIQT (181 aa)). Residues 29–32 (YGSQ), Lys-52, Ser-55, Ser-57, and 87–90 (DPAQ) contribute to the NADP(+) site. His-112 is a catalytic residue. NADP(+) is bound at residue Gly-138. Residues 187-332 (TFTEETETDL…ARLRALFSWS (146 aa)) form the KARI C-terminal knotted domain. Mg(2+)-binding residues include Asp-195, Glu-199, Glu-231, and Glu-235. Residue Ser-256 coordinates substrate.

The protein belongs to the ketol-acid reductoisomerase family. Mg(2+) serves as cofactor.

It carries out the reaction (2R)-2,3-dihydroxy-3-methylbutanoate + NADP(+) = (2S)-2-acetolactate + NADPH + H(+). It catalyses the reaction (2R,3R)-2,3-dihydroxy-3-methylpentanoate + NADP(+) = (S)-2-ethyl-2-hydroxy-3-oxobutanoate + NADPH + H(+). It functions in the pathway amino-acid biosynthesis; L-isoleucine biosynthesis; L-isoleucine from 2-oxobutanoate: step 2/4. The protein operates within amino-acid biosynthesis; L-valine biosynthesis; L-valine from pyruvate: step 2/4. Involved in the biosynthesis of branched-chain amino acids (BCAA). Catalyzes an alkyl-migration followed by a ketol-acid reduction of (S)-2-acetolactate (S2AL) to yield (R)-2,3-dihydroxy-isovalerate. In the isomerase reaction, S2AL is rearranged via a Mg-dependent methyl migration to produce 3-hydroxy-3-methyl-2-ketobutyrate (HMKB). In the reductase reaction, this 2-ketoacid undergoes a metal-dependent reduction by NADPH to yield (R)-2,3-dihydroxy-isovalerate. This Tropheryma whipplei (strain TW08/27) (Whipple's bacillus) protein is Ketol-acid reductoisomerase (NADP(+)).